Consider the following 47-residue polypeptide: Conotoxin Bu10 (47 aa).

Positions 1-22 are excised as a propeptide; that stretch reads DSRGTQLHRALRKATILSVSAR. 3 disulfide bridges follow: cysteine 23–cysteine 37, cysteine 30–cysteine 41, and cysteine 36–cysteine 46. The residue at position 46 (cysteine 46) is a Cysteine amide.

Belongs to the conotoxin O1 superfamily. Expressed by the venom duct.

It localises to the secreted. In Conus bullatus (Bubble cone), this protein is Conotoxin Bu10.